The primary structure comprises 1025 residues: Leucyl-cystinyl aminopeptidase (1025 aa).

Residue methionine 1 is modified to N-acetylmethionine. Topologically, residues 1-109 (METFTNDRLQ…DGTCSVPSAR (109 aa)) are cytoplasmic. Positions 53–54 (LL) match the Dileucine internalization motif motif. Residue tyrosine 70 is modified to Phosphotyrosine. Positions 76-77 (LL) match the Dileucine internalization motif motif. Residues serine 80 and serine 91 each carry the phosphoserine; by PKC/PRKCZ; in vitro modification. Residues 96 to 101 (RQSPDG) form a tankyrase binding region. A helical; Signal-anchor for type II membrane protein transmembrane segment spans residues 110-131 (TLVICVFVIVVAVSVIMVIYLL). The Extracellular portion of the chain corresponds to 132–1025 (PRCTFTKEGC…RNLKTLTLWL (894 aa)). 5 N-linked (GlcNAc...) asparagine glycosylation sites follow: asparagine 145, asparagine 184, asparagine 215, asparagine 256, and asparagine 266. Position 295 (glutamate 295) interacts with substrate. Residues asparagine 368 and asparagine 374 are each glycosylated (N-linked (GlcNAc...) asparagine). 428 to 432 (GAMEN) contacts substrate. Asparagine 447 is a glycosylation site (N-linked (GlcNAc...) asparagine). Histidine 464 contacts Zn(2+). Glutamate 465 (proton acceptor) is an active-site residue. The Zn(2+) site is built by histidine 468 and glutamate 487. Residues asparagine 525, asparagine 578, asparagine 664, asparagine 682, asparagine 695, asparagine 758, asparagine 834, asparagine 850, and asparagine 989 are each glycosylated (N-linked (GlcNAc...) asparagine).

This sequence belongs to the peptidase M1 family. As to quaternary structure, homodimer. Binds tankyrases 1 and 2. It depends on Zn(2+) as a cofactor. In terms of processing, N-glycosylated. Highly expressed in heart, brain, spleen, lung, kidney and white adipose tissue. Detected at lower levels in skeletal muscle and liver.

It is found in the cell membrane. The protein resides in the endomembrane system. It carries out the reaction Release of an N-terminal amino acid, Cys-|-Xaa-, in which the half-cystine residue is involved in a disulfide loop, notably in oxytocin or vasopressin. Hydrolysis rates on a range of aminoacyl arylamides exceed that for the cystinyl derivative, however.. Its function is as follows. Release of an N-terminal amino acid, cleave before cysteine, leucine as well as other amino acids. Degrades peptide hormones such as oxytocin, vasopressin and angiotensin III, and plays a role in maintaining homeostasis during pregnancy. May be involved in the inactivation of neuronal peptides in the brain. Cleaves Met-enkephalin and dynorphin. Binds angiotensin IV and may be the angiotensin IV receptor in the brain. The sequence is that of Leucyl-cystinyl aminopeptidase (Lnpep) from Rattus norvegicus (Rat).